A 226-amino-acid polypeptide reads, in one-letter code: Uracil-DNA glycosylase (226 aa).

Asp64 serves as the catalytic Proton acceptor.

It belongs to the uracil-DNA glycosylase (UDG) superfamily. UNG family.

The protein localises to the cytoplasm. The catalysed reaction is Hydrolyzes single-stranded DNA or mismatched double-stranded DNA and polynucleotides, releasing free uracil.. Functionally, excises uracil residues from the DNA which can arise as a result of misincorporation of dUMP residues by DNA polymerase or due to deamination of cytosine. This Vibrio vulnificus (strain CMCP6) protein is Uracil-DNA glycosylase.